A 443-amino-acid chain; its full sequence is tRNA-2-methylthio-N(6)-dimethylallyladenosine synthase (443 aa).

Residues 1-114 (MRFYIKTFGC…VTEAVKRALQ (114 aa)) form the MTTase N-terminal domain. [4Fe-4S] cluster contacts are provided by Cys10, Cys46, Cys79, Cys150, Cys154, and Cys157. One can recognise a Radical SAM core domain in the interval 136-367 (RSSKHHAWVT…MNLQKRINRK (232 aa)). Residues 370 to 431 (ERYKGKTVRV…AGPLYGKVVW (62 aa)) enclose the TRAM domain.

It belongs to the methylthiotransferase family. MiaB subfamily. Monomer. [4Fe-4S] cluster serves as cofactor.

Its subcellular location is the cytoplasm. It carries out the reaction N(6)-dimethylallyladenosine(37) in tRNA + (sulfur carrier)-SH + AH2 + 2 S-adenosyl-L-methionine = 2-methylsulfanyl-N(6)-dimethylallyladenosine(37) in tRNA + (sulfur carrier)-H + 5'-deoxyadenosine + L-methionine + A + S-adenosyl-L-homocysteine + 2 H(+). In terms of biological role, catalyzes the methylthiolation of N6-(dimethylallyl)adenosine (i(6)A), leading to the formation of 2-methylthio-N6-(dimethylallyl)adenosine (ms(2)i(6)A) at position 37 in tRNAs that read codons beginning with uridine. This Thermotoga sp. (strain RQ2) protein is tRNA-2-methylthio-N(6)-dimethylallyladenosine synthase.